Reading from the N-terminus, the 378-residue chain is Heterogeneous nuclear ribonucleoprotein A3 (378 aa).

Position 1 is an N-acetylmethionine (Met1). Over residues 1–10 the composition is skewed to pro residues; the sequence is MEVKPPPGRP. Positions 1 to 34 are disordered; that stretch reads MEVKPPPGRPQPDSGRRRRRRGEEGHDPKEPEQL. Residue Lys4 forms a Glycyl lysine isopeptide (Lys-Gly) (interchain with G-Cter in SUMO2) linkage. A Phosphoserine modification is found at Ser14. The span at 21–34 shows a compositional bias: basic and acidic residues; that stretch reads RGEEGHDPKEPEQL. The RRM 1 domain occupies 35–118; the sequence is RKLFIGGLSF…RAVSREDSVK (84 aa). Lys36 is covalently cross-linked (Glycyl lysine isopeptide (Lys-Gly) (interchain with G-Cter in SUMO2)). A Phosphoserine modification is found at Ser43. Residue Arg52 is modified to Dimethylated arginine; alternate. Arg52 is modified (omega-N-methylarginine; alternate). Arg76 is subject to Omega-N-methylarginine. Residues Ser112 and Ser116 each carry the phosphoserine modification. A Glycyl lysine isopeptide (Lys-Gly) (interchain with G-Cter in SUMO2) cross-link involves residue Lys118. Thr124 bears the Phosphothreonine mark. Residues 126-205 form the RRM 2 domain; the sequence is KKIFVGGIKE…CEVKKALSKQ (80 aa). Lys134 carries the N6-acetyllysine; alternate modification. Lys134 is covalently cross-linked (Glycyl lysine isopeptide (Lys-Gly) (interchain with G-Cter in SUMO2); alternate). Glycyl lysine isopeptide (Lys-Gly) (interchain with G-Cter in SUMO2) cross-links involve residues Lys151 and Lys182. A disordered region spans residues 204 to 225; that stretch reads KQEMQSAGSQRGRGGGSGNFMG. Omega-N-methylarginine; alternate is present on residues Arg214, Arg216, Arg226, Arg239, and Arg246. Asymmetric dimethylarginine; alternate occurs at positions 214, 216, 226, 239, and 246. Residues 214-225 show a composition bias toward gly residues; that stretch reads RGRGGGSGNFMG. Arg257 carries the post-translational modification Omega-N-methylarginine. Asymmetric dimethylarginine is present on Arg286. A disordered region spans residues 336–378; it reads SGQQQSNYGPMKGGSFGGRSSGSPYGGGYGSGGGSGGYGSRRF. The segment covering 346 to 378 has biased composition (gly residues); the sequence is MKGGSFGGRSSGSPYGGGYGSGGGSGGYGSRRF. Ser350 carries the phosphoserine modification. Arg354 carries the omega-N-methylarginine modification. Ser358 is modified (phosphoserine). Phosphotyrosine is present on residues Tyr360 and Tyr364. Phosphoserine occurs at positions 366 and 370. Phosphotyrosine is present on Tyr373. Ser375 carries the phosphoserine modification.

As to quaternary structure, identified in the spliceosome C complex.

It localises to the nucleus. Plays a role in cytoplasmic trafficking of RNA. Binds to the cis-acting response element, A2RE. May be involved in pre-mRNA splicing. This is Heterogeneous nuclear ribonucleoprotein A3 (HNRNPA3) from Homo sapiens (Human).